Consider the following 318-residue polypeptide: NADH-ubiquinone oxidoreductase chain 1 (318 aa).

8 helical membrane-spanning segments follow: residues 2 to 22 (FMVN…FLTL), 76 to 96 (TLAL…HPLI), 98 to 118 (FNLG…SILW), 140 to 160 (ISYE…SGSF), 171 to 191 (HSWL…STLA), 217 to 237 (AGSF…MNAL), 253 to 273 (ELYT…FLWI), and 294 to 314 (LPLT…TSGI).

The protein belongs to the complex I subunit 1 family. In terms of assembly, core subunit of respiratory chain NADH dehydrogenase (Complex I) which is composed of 45 different subunits.

The protein localises to the mitochondrion inner membrane. The enzyme catalyses a ubiquinone + NADH + 5 H(+)(in) = a ubiquinol + NAD(+) + 4 H(+)(out). In terms of biological role, core subunit of the mitochondrial membrane respiratory chain NADH dehydrogenase (Complex I) which catalyzes electron transfer from NADH through the respiratory chain, using ubiquinone as an electron acceptor. Essential for the catalytic activity and assembly of complex I. The sequence is that of NADH-ubiquinone oxidoreductase chain 1 (MT-ND1) from Ateles paniscus (Black spider monkey).